Consider the following 177-residue polypeptide: DELTA-stichotoxin-Hmg2b (177 aa).

The interval 3 to 12 (ALAGTIIAGA) is plays an important role in the hemolytic activity. Residues 11-30 (GASLGFQILDKVLGELGKVS) are N-terminal region. Residues serine 54, valine 87, serine 105, proline 107, tyrosine 133, tyrosine 137, and tyrosine 138 each coordinate phosphocholine.

It belongs to the actinoporin family. Sea anemone subfamily. In terms of assembly, octamer or nonamer in membranes. Monomer in the soluble state.

It localises to the secreted. Its subcellular location is the nematocyst. The protein resides in the target cell membrane. In terms of biological role, pore-forming protein that forms cations-selective hydrophilic pores of around 1 nm and causes cytolysis. Pore formation is a multi-step process that involves specific recognition of membrane sphingomyelin (but neither cholesterol nor phosphatidylcholine) using aromatic rich region and adjacent phosphocholine (POC) binding site, firm binding to the membrane (mainly driven by hydrophobic interactions) accompanied by the transfer of the N-terminal region to the lipid-water interface and finally pore formation after oligomerization of monomers This toxin shows hemolytic activity. The chain is DELTA-stichotoxin-Hmg2b from Heteractis magnifica (Magnificent sea anemone).